The sequence spans 149 residues: UPF0178 protein SERP0336 (149 aa).

It belongs to the UPF0178 family.

The chain is UPF0178 protein SERP0336 from Staphylococcus epidermidis (strain ATCC 35984 / DSM 28319 / BCRC 17069 / CCUG 31568 / BM 3577 / RP62A).